The chain runs to 224 residues: Lipoprotein-releasing system ATP-binding protein LolD (224 aa).

The region spanning 4–224 (YTAKDISKNY…TLLDGSLQEE (221 aa)) is the ABC transporter domain. 40–47 (GASGSGKT) is a binding site for ATP.

The protein belongs to the ABC transporter superfamily. Lipoprotein translocase (TC 3.A.1.125) family. The complex is composed of two ATP-binding proteins (LolD) and two transmembrane proteins (LolC and LolE).

It localises to the cell inner membrane. Part of the ABC transporter complex LolCDE involved in the translocation of mature outer membrane-directed lipoproteins, from the inner membrane to the periplasmic chaperone, LolA. Responsible for the formation of the LolA-lipoprotein complex in an ATP-dependent manner. The sequence is that of Lipoprotein-releasing system ATP-binding protein LolD from Desulfotalea psychrophila (strain LSv54 / DSM 12343).